The primary structure comprises 255 residues: Small ribosomal subunit protein uS2 (255 aa).

Positions 232–255 are disordered; sequence ASGRDIGASEEAPIEPALEDEAGA.

Belongs to the universal ribosomal protein uS2 family.

This chain is Small ribosomal subunit protein uS2, found in Agrobacterium fabrum (strain C58 / ATCC 33970) (Agrobacterium tumefaciens (strain C58)).